The following is a 231-amino-acid chain: 5'-methylthioadenosine/S-adenosylhomocysteine nucleosidase (231 aa).

Residue Glu13 is the Proton acceptor of the active site. Residues Gly79, Met153, and 174-175 (ME) each bind substrate. Asp198 acts as the Proton donor in catalysis.

It belongs to the PNP/UDP phosphorylase family. MtnN subfamily.

The catalysed reaction is S-adenosyl-L-homocysteine + H2O = S-(5-deoxy-D-ribos-5-yl)-L-homocysteine + adenine. It catalyses the reaction S-methyl-5'-thioadenosine + H2O = 5-(methylsulfanyl)-D-ribose + adenine. The enzyme catalyses 5'-deoxyadenosine + H2O = 5-deoxy-D-ribose + adenine. It functions in the pathway amino-acid biosynthesis; L-methionine biosynthesis via salvage pathway; S-methyl-5-thio-alpha-D-ribose 1-phosphate from S-methyl-5'-thioadenosine (hydrolase route): step 1/2. In terms of biological role, catalyzes the irreversible cleavage of the glycosidic bond in both 5'-methylthioadenosine (MTA) and S-adenosylhomocysteine (SAH/AdoHcy) to adenine and the corresponding thioribose, 5'-methylthioribose and S-ribosylhomocysteine, respectively. Also cleaves 5'-deoxyadenosine, a toxic by-product of radical S-adenosylmethionine (SAM) enzymes, into 5-deoxyribose and adenine. The chain is 5'-methylthioadenosine/S-adenosylhomocysteine nucleosidase from Halalkalibacterium halodurans (strain ATCC BAA-125 / DSM 18197 / FERM 7344 / JCM 9153 / C-125) (Bacillus halodurans).